The following is a 248-amino-acid chain: Sulfur carrier protein FdhD (248 aa).

Cys99 functions as the Cysteine persulfide intermediate in the catalytic mechanism. Phe232–Arg237 contributes to the Mo-bis(molybdopterin guanine dinucleotide) binding site.

It belongs to the FdhD family.

Its subcellular location is the cytoplasm. In terms of biological role, required for formate dehydrogenase (FDH) activity. Acts as a sulfur carrier protein that transfers sulfur from IscS to the molybdenum cofactor prior to its insertion into FDH. This Methanothermobacter thermautotrophicus (strain ATCC 29096 / DSM 1053 / JCM 10044 / NBRC 100330 / Delta H) (Methanobacterium thermoautotrophicum) protein is Sulfur carrier protein FdhD.